The chain runs to 152 residues: Clitocypin-5 (152 aa).

In terms of assembly, homodimer.

In terms of biological role, binds and inhibits cysteine proteinases. Inhibits most strongly papain and cathepsin L, more weakly bromelain and cathepsin B while it is completely ineffective against cathepsin H. The protein is Clitocypin-5 (clt5) of Clitocybe nebularis (Clouded agaric).